The following is a 431-amino-acid chain: Glucose-6-phosphate isomerase (431 aa).

E284 serves as the catalytic Proton donor. Residues H305 and K420 contribute to the active site.

The protein belongs to the GPI family.

It localises to the cytoplasm. The catalysed reaction is alpha-D-glucose 6-phosphate = beta-D-fructose 6-phosphate. The protein operates within carbohydrate biosynthesis; gluconeogenesis. Its pathway is carbohydrate degradation; glycolysis; D-glyceraldehyde 3-phosphate and glycerone phosphate from D-glucose: step 2/4. Catalyzes the reversible isomerization of glucose-6-phosphate to fructose-6-phosphate. This is Glucose-6-phosphate isomerase from Mycoplasma genitalium (strain ATCC 33530 / DSM 19775 / NCTC 10195 / G37) (Mycoplasmoides genitalium).